The sequence spans 132 residues: Large ribosomal subunit protein uL14 (132 aa).

The protein belongs to the universal ribosomal protein uL14 family. Part of the 50S ribosomal subunit. Forms a cluster with proteins L3 and L24e, part of which may contact the 16S rRNA in 2 intersubunit bridges.

Its function is as follows. Binds to 23S rRNA. Forms part of two intersubunit bridges in the 70S ribosome. The protein is Large ribosomal subunit protein uL14 of Methanoregula boonei (strain DSM 21154 / JCM 14090 / 6A8).